A 205-amino-acid polypeptide reads, in one-letter code: MFEYVTGYVEYVGPEYVVIDHNGIGYQIFTPNPYVFQRSKQEIRVYTYHYVREDIMALYGFKTREERLLFTKLLGVSGIGPKGALAILASGQTGQVVQAIEHEDEKFLVKFPGVGKKTARQMILDLKGKLADVVPDAFVDLFSDTESFDTKKGSSVELDEALEALRALGYAEREVSRVVPELLKESLTTDQYIKKALSLLLNGKR.

A domain I region spans residues 1-62; the sequence is MFEYVTGYVE…EDIMALYGFK (62 aa). Positions 63-141 are domain II; it reads TREERLLFTK…DVVPDAFVDL (79 aa). The flexible linker stretch occupies residues 142–152; that stretch reads FSDTESFDTKK. Residues 153–205 form a domain III region; it reads GSSVELDEALEALRALGYAEREVSRVVPELLKESLTTDQYIKKALSLLLNGKR.

This sequence belongs to the RuvA family. As to quaternary structure, homotetramer. Forms an RuvA(8)-RuvB(12)-Holliday junction (HJ) complex. HJ DNA is sandwiched between 2 RuvA tetramers; dsDNA enters through RuvA and exits via RuvB. An RuvB hexamer assembles on each DNA strand where it exits the tetramer. Each RuvB hexamer is contacted by two RuvA subunits (via domain III) on 2 adjacent RuvB subunits; this complex drives branch migration. In the full resolvosome a probable DNA-RuvA(4)-RuvB(12)-RuvC(2) complex forms which resolves the HJ.

The protein resides in the cytoplasm. Functionally, the RuvA-RuvB-RuvC complex processes Holliday junction (HJ) DNA during genetic recombination and DNA repair, while the RuvA-RuvB complex plays an important role in the rescue of blocked DNA replication forks via replication fork reversal (RFR). RuvA specifically binds to HJ cruciform DNA, conferring on it an open structure. The RuvB hexamer acts as an ATP-dependent pump, pulling dsDNA into and through the RuvAB complex. HJ branch migration allows RuvC to scan DNA until it finds its consensus sequence, where it cleaves and resolves the cruciform DNA. In Bacillus mycoides (strain KBAB4) (Bacillus weihenstephanensis), this protein is Holliday junction branch migration complex subunit RuvA.